The chain runs to 440 residues: C4-dicarboxylate transport protein (440 aa).

Transmembrane regions (helical) follow at residues 7 to 29, 49 to 66, 79 to 101, 143 to 165, 186 to 208, 221 to 243, 291 to 313, 328 to 350, and 355 to 377; these read LYKS…GHYY, MVIA…IAGM, ALLY…VNVV, VVGA…FGFA, VMFN…AMAF, LGYL…LGGI, VVGL…YLTM, ITHQ…GVTG, and VLAA…ILGI. The tract at residues 419–440 is disordered; it reads GGAPLIDTRPTDDLGVAEGPAR.

The protein belongs to the dicarboxylate/amino acid:cation symporter (DAACS) (TC 2.A.23) family.

Its subcellular location is the cell inner membrane. In terms of biological role, responsible for the transport of dicarboxylates such as succinate, fumarate, and malate from the periplasm across the membrane. The chain is C4-dicarboxylate transport protein from Pseudomonas putida (strain ATCC 47054 / DSM 6125 / CFBP 8728 / NCIMB 11950 / KT2440).